The chain runs to 308 residues: CMP-N-acetylneuraminate:beta-galactoside alpha-2,3-sialyltransferase (308 aa).

The Proton acceptor role is filled by Asp-201. CMP-N-acetyl-beta-neuraminate contacts are provided by residues 221-225 (LPHPR), 242-243 (FE), and 262-263 (SS). The active-site Proton donor is His-223.

This sequence belongs to the glycosyltransferase 52 family. It depends on Divalent metal cations are not required for the alpha-2,3-sialyltransferase activity. as a cofactor.

In terms of biological role, catalyzes the transfer of sialic acid from the substrate CMP-N-acetylneuraminate to lactosyl lipids as preferred acceptor substrates in vitro, forming alpha-2,3-linked sialosides. Beta-1,4-linked galactosyl lipids are better substrates than beta-1,3-linked galactosyl lipids. The natural acceptor substrate may be cell surface oligosaccharides in lipooligosaccharide (LOS), whose sialylation has been demonstrated vital for the virulence of P.multocida. This is CMP-N-acetylneuraminate:beta-galactoside alpha-2,3-sialyltransferase (lst) from Pasteurella multocida (strain Pm70).